The primary structure comprises 496 residues: N-acetylmuramoyl-L-alanine amidase LytC (496 aa).

An N-terminal signal peptide occupies residues 1-24 (MRSYIKVLTMCFLGLILFVPTALA). Tandem repeats lie at residues 30 to 128 (RVGG…ISIK), 129 to 222 (RIAG…PSPT), and 223 to 318 (RISG…NPVV). The 3 X tandem repeats stretch occupies residues 30–318 (RVGGSNRYGT…VANQLKNPVV (289 aa)). In terms of domain architecture, MurNAc-LAA spans 322-490 (IFIDPGHGDQ…DKAAQAIHDG (169 aa)).

The protein belongs to the N-acetylmuramoyl-L-alanine amidase 3 family.

The protein localises to the secreted. It is found in the cell wall. It catalyses the reaction Hydrolyzes the link between N-acetylmuramoyl residues and L-amino acid residues in certain cell-wall glycopeptides.. Functionally, autolysins are cell wall hydrolases involved in some important biological processes such as cell separation, cell-wall turnover, competence for genetic transformation, formation of the flagella - in particular of its basal body - and sporulation. Has a high affinity for teichoic acid-endowed peptidoglycan. LytC is required for efficient swarming motility but not at the level of cell separation or flagellum biosynthesis. Rather, LytC appears to be important for proper flagellar function. In Bacillus subtilis (strain 168), this protein is N-acetylmuramoyl-L-alanine amidase LytC (lytC).